Reading from the N-terminus, the 945-residue chain is MSNKKADSKPQAKYPVNLLDTPFPMRGDLPKREPQWVKEWEERGIYEKIRAASKGRPKFILHDGPPYANGDIHLGHAVNKILKDIVVKSRNMAGFDAPYVPGWDCHGMPIEIQIEKQFGKSLPAAEVMSKARAYATEQIEKQKVGFKRLGVLGDWANPYKTMNFVNEAEEIRALGKIIEKGYVYRGLKPVNWCFDCGSALAEAEVEYKDRTDPTIDVMFAFAEPEKTAQAFGLPALPRAEGGIVIWTTTPWTIPANQALNLHPEIVYALVDTERGLLIIAEERVAACMADFKLTGRVVATAPGVKLANLRFHHPLASAHPGYKRTAPVYLGDYVTTDTGTGVVHSSPAYGIEDFMSCKAHGMTDSDFINPVMGDGRYIESLPLFGGLSIWDANPKIVDALNAAGSLLRSEKYTHSYMHCWRHKTPIIYRATSQWFAGMDVTPRDDGKTLREAALEGVEATAFYPSWGKQRLFSMIANRPDWTLSRQRQWGVPMAFFVHKETGELHPRTLELLEEVAKRVEQSGIEAWQSLDPRELIGDDANMYEKNRDTLDVWFDSGTTHWHVLRGSHKDQLQFPADLYLEGSDQHRGWFHSSLLTASMIDGRAPYKGLLTHGFTVDGEGRKMSKSLGNGVDPHEVANRLGAEIIRLWIASTDYSGELAISEEILKRVTEGYRRIRNTLRFLLANLSDFDFAQHAVPVDEWLEIDRYAVAFSAQLQTELLGHYEKYEFHPVVAKLQTYCSEDLGGFYLDVLKDRLYTSAADSRARRSAQTALYHLTHGLLRVLAPFLSFTAEEAWKVFQPASDTVFTETYYAYPEVAGSAALIEKWALLRDVRGNVTKALEEARTANRIGSSLQAEVAVHASGARYDALTSLGDDLKFVLITSAATVVKVDDEAQESVDVAASKYQKCERCWHYREDVGAHADHPTLCGRCFSNLFENGEIRSAA.

The 'HIGH' region signature appears at 66-76 (PYANGDIHLGH). Glutamate 581 contributes to the L-isoleucyl-5'-AMP binding site. Positions 622–626 (KMSKS) match the 'KMSKS' region motif. Residue lysine 625 coordinates ATP. Zn(2+) is bound by residues cysteine 908, cysteine 911, cysteine 928, and cysteine 931.

It belongs to the class-I aminoacyl-tRNA synthetase family. IleS type 1 subfamily. As to quaternary structure, monomer. Zn(2+) serves as cofactor.

Its subcellular location is the cytoplasm. The enzyme catalyses tRNA(Ile) + L-isoleucine + ATP = L-isoleucyl-tRNA(Ile) + AMP + diphosphate. Catalyzes the attachment of isoleucine to tRNA(Ile). As IleRS can inadvertently accommodate and process structurally similar amino acids such as valine, to avoid such errors it has two additional distinct tRNA(Ile)-dependent editing activities. One activity is designated as 'pretransfer' editing and involves the hydrolysis of activated Val-AMP. The other activity is designated 'posttransfer' editing and involves deacylation of mischarged Val-tRNA(Ile). In Burkholderia ambifaria (strain ATCC BAA-244 / DSM 16087 / CCUG 44356 / LMG 19182 / AMMD) (Burkholderia cepacia (strain AMMD)), this protein is Isoleucine--tRNA ligase.